Here is a 478-residue protein sequence, read N- to C-terminus: UDP-N-acetylmuramate--L-alanine ligase (478 aa).

Residue 126–132 (GTHGKTT) participates in ATP binding.

Belongs to the MurCDEF family.

Its subcellular location is the cytoplasm. The enzyme catalyses UDP-N-acetyl-alpha-D-muramate + L-alanine + ATP = UDP-N-acetyl-alpha-D-muramoyl-L-alanine + ADP + phosphate + H(+). The protein operates within cell wall biogenesis; peptidoglycan biosynthesis. Cell wall formation. This is UDP-N-acetylmuramate--L-alanine ligase from Mycolicibacterium vanbaalenii (strain DSM 7251 / JCM 13017 / BCRC 16820 / KCTC 9966 / NRRL B-24157 / PYR-1) (Mycobacterium vanbaalenii).